A 322-amino-acid polypeptide reads, in one-letter code: Methionyl-tRNA formyltransferase (322 aa).

112 to 115 (SLLP) lines the (6S)-5,6,7,8-tetrahydrofolate pocket.

The protein belongs to the Fmt family.

It catalyses the reaction L-methionyl-tRNA(fMet) + (6R)-10-formyltetrahydrofolate = N-formyl-L-methionyl-tRNA(fMet) + (6S)-5,6,7,8-tetrahydrofolate + H(+). Its function is as follows. Attaches a formyl group to the free amino group of methionyl-tRNA(fMet). The formyl group appears to play a dual role in the initiator identity of N-formylmethionyl-tRNA by promoting its recognition by IF2 and preventing the misappropriation of this tRNA by the elongation apparatus. The protein is Methionyl-tRNA formyltransferase of Synechococcus sp. (strain JA-2-3B'a(2-13)) (Cyanobacteria bacterium Yellowstone B-Prime).